The primary structure comprises 492 residues: Ketol-acid reductoisomerase (NADP(+)) (492 aa).

The KARI N-terminal Rossmann domain occupies 14-208; that stretch reads LDQLGRCRFM…GGHKAGVLES (195 aa). Residues 45-48, Arg68, Arg76, Ser78, and 108-110 contribute to the NADP(+) site; these read CGAQ and DKQ. His132 is a catalytic residue. Gly158 contacts NADP(+). 2 consecutive KARI C-terminal knotted domains span residues 209-344 and 345-485; these read SFVA…NAPK and YDGK…MTDM. Mg(2+) is bound by residues Asp217, Glu221, Glu389, and Glu393. Position 414 (Ser414) interacts with substrate.

This sequence belongs to the ketol-acid reductoisomerase family. It depends on Mg(2+) as a cofactor.

The catalysed reaction is (2R)-2,3-dihydroxy-3-methylbutanoate + NADP(+) = (2S)-2-acetolactate + NADPH + H(+). It carries out the reaction (2R,3R)-2,3-dihydroxy-3-methylpentanoate + NADP(+) = (S)-2-ethyl-2-hydroxy-3-oxobutanoate + NADPH + H(+). It participates in amino-acid biosynthesis; L-isoleucine biosynthesis; L-isoleucine from 2-oxobutanoate: step 2/4. The protein operates within amino-acid biosynthesis; L-valine biosynthesis; L-valine from pyruvate: step 2/4. In terms of biological role, involved in the biosynthesis of branched-chain amino acids (BCAA). Catalyzes an alkyl-migration followed by a ketol-acid reduction of (S)-2-acetolactate (S2AL) to yield (R)-2,3-dihydroxy-isovalerate. In the isomerase reaction, S2AL is rearranged via a Mg-dependent methyl migration to produce 3-hydroxy-3-methyl-2-ketobutyrate (HMKB). In the reductase reaction, this 2-ketoacid undergoes a metal-dependent reduction by NADPH to yield (R)-2,3-dihydroxy-isovalerate. This chain is Ketol-acid reductoisomerase (NADP(+)), found in Haemophilus influenzae (strain PittGG).